A 306-amino-acid polypeptide reads, in one-letter code: Ribosomal protein L11 methyltransferase (306 aa).

S-adenosyl-L-methionine is bound by residues Thr-152, Gly-179, Asp-201, and Asn-243.

The protein belongs to the methyltransferase superfamily. PrmA family.

It localises to the cytoplasm. It catalyses the reaction L-lysyl-[protein] + 3 S-adenosyl-L-methionine = N(6),N(6),N(6)-trimethyl-L-lysyl-[protein] + 3 S-adenosyl-L-homocysteine + 3 H(+). In terms of biological role, methylates ribosomal protein L11. This chain is Ribosomal protein L11 methyltransferase, found in Geobacter sp. (strain M21).